The sequence spans 245 residues: Large ribosomal subunit protein uL29m (245 aa).

Composition is skewed to low complexity over residues S36 to S49 and S234 to I245. Disordered regions lie at residues S36–H98 and R207–I245.

This sequence belongs to the universal ribosomal protein uL29 family. Component of the mitochondrial large ribosomal subunit. Mature mitochondrial ribosomes consist of a small (37S) and a large (54S) subunit. The 37S subunit contains at least 33 different proteins and 1 molecule of RNA (15S). The 54S subunit contains at least 45 different proteins and 1 molecule of RNA (21S).

It localises to the mitochondrion. The sequence is that of Large ribosomal subunit protein uL29m (MRPL4) from Coccidioides immitis (strain RS) (Valley fever fungus).